The sequence spans 246 residues: DNA repair protein RecO (246 aa).

The protein belongs to the RecO family.

In terms of biological role, involved in DNA repair and RecF pathway recombination. This Pelobacter propionicus (strain DSM 2379 / NBRC 103807 / OttBd1) protein is DNA repair protein RecO.